The sequence spans 92 residues: Small ribosomal subunit protein uS19c (92 aa).

It belongs to the universal ribosomal protein uS19 family.

The protein resides in the plastid. It is found in the chloroplast. Protein S19 forms a complex with S13 that binds strongly to the 16S ribosomal RNA. In Picea abies (Norway spruce), this protein is Small ribosomal subunit protein uS19c (rps19).